The sequence spans 117 residues: Phosphoribosyl-ATP pyrophosphatase (117 aa).

Over residues 96-105 (GVSGIEEKLS) the composition is skewed to basic and acidic residues. A disordered region spans residues 96–117 (GVSGIEEKLSRSQNQPEPTKAE). Residues 106-117 (RSQNQPEPTKAE) show a composition bias toward polar residues.

Belongs to the PRA-PH family.

The protein resides in the cytoplasm. The enzyme catalyses 1-(5-phospho-beta-D-ribosyl)-ATP + H2O = 1-(5-phospho-beta-D-ribosyl)-5'-AMP + diphosphate + H(+). Its pathway is amino-acid biosynthesis; L-histidine biosynthesis; L-histidine from 5-phospho-alpha-D-ribose 1-diphosphate: step 2/9. In Nitrosomonas eutropha (strain DSM 101675 / C91 / Nm57), this protein is Phosphoribosyl-ATP pyrophosphatase.